Reading from the N-terminus, the 418-residue chain is Serine hydroxymethyltransferase (418 aa).

Residues Leu121 and 125-127 (GHL) contribute to the (6S)-5,6,7,8-tetrahydrofolate site. An N6-(pyridoxal phosphate)lysine modification is found at Lys230. (6S)-5,6,7,8-tetrahydrofolate is bound by residues Glu246 and 355 to 357 (SPF).

The protein belongs to the SHMT family. In terms of assembly, homodimer. The cofactor is pyridoxal 5'-phosphate.

The protein resides in the cytoplasm. It carries out the reaction (6R)-5,10-methylene-5,6,7,8-tetrahydrofolate + glycine + H2O = (6S)-5,6,7,8-tetrahydrofolate + L-serine. It functions in the pathway one-carbon metabolism; tetrahydrofolate interconversion. Its pathway is amino-acid biosynthesis; glycine biosynthesis; glycine from L-serine: step 1/1. Functionally, catalyzes the reversible interconversion of serine and glycine with tetrahydrofolate (THF) serving as the one-carbon carrier. This reaction serves as the major source of one-carbon groups required for the biosynthesis of purines, thymidylate, methionine, and other important biomolecules. Also exhibits THF-independent aldolase activity toward beta-hydroxyamino acids, producing glycine and aldehydes, via a retro-aldol mechanism. In Streptococcus pneumoniae (strain 70585), this protein is Serine hydroxymethyltransferase.